Consider the following 615-residue polypeptide: Sorting nexin-41 (615 aa).

The interval methionine 1–asparagine 71 is disordered. A compositionally biased stretch (low complexity) spans serine 42 to serine 53. A PX domain is found at proline 93–serine 210. A 1,2-diacyl-sn-glycero-3-phospho-(1D-myo-inositol-3-phosphate) contacts are provided by arginine 127, serine 129, lysine 153, and arginine 176. Disordered regions lie at residues alanine 218 to proline 277 and glutamine 432 to serine 504. 2 stretches are compositionally biased toward polar residues: residues leucine 252–asparagine 263 and leucine 434–arginine 446. Low complexity predominate over residues serine 447–serine 456.

Belongs to the sorting nexin family.

The protein resides in the endosome membrane. It localises to the endomembrane system. Functionally, may be required for cytoplasm to vacuole transport (Cvt) and pexophagy. This Emericella nidulans (strain FGSC A4 / ATCC 38163 / CBS 112.46 / NRRL 194 / M139) (Aspergillus nidulans) protein is Sorting nexin-41 (snx41).